A 313-amino-acid chain; its full sequence is tRNA dimethylallyltransferase (313 aa).

Residue 11 to 18 (GPTACGKT) coordinates ATP. Residue 13 to 18 (TACGKT) coordinates substrate. 3 interaction with substrate tRNA regions span residues 36–39 (DSAL), 160–164 (QRIGR), and 243–248 (RCVGYR).

It belongs to the IPP transferase family. Monomer. Mg(2+) serves as cofactor.

The enzyme catalyses adenosine(37) in tRNA + dimethylallyl diphosphate = N(6)-dimethylallyladenosine(37) in tRNA + diphosphate. Catalyzes the transfer of a dimethylallyl group onto the adenine at position 37 in tRNAs that read codons beginning with uridine, leading to the formation of N6-(dimethylallyl)adenosine (i(6)A). This Neisseria gonorrhoeae (strain NCCP11945) protein is tRNA dimethylallyltransferase.